The following is a 369-amino-acid chain: Aminomethyltransferase (369 aa).

Belongs to the GcvT family. The glycine cleavage system is composed of four proteins: P, T, L and H.

It carries out the reaction N(6)-[(R)-S(8)-aminomethyldihydrolipoyl]-L-lysyl-[protein] + (6S)-5,6,7,8-tetrahydrofolate = N(6)-[(R)-dihydrolipoyl]-L-lysyl-[protein] + (6R)-5,10-methylene-5,6,7,8-tetrahydrofolate + NH4(+). Its function is as follows. The glycine cleavage system catalyzes the degradation of glycine. This is Aminomethyltransferase from Alkaliphilus metalliredigens (strain QYMF).